The sequence spans 128 residues: Large ribosomal subunit protein bL17 (128 aa).

This sequence belongs to the bacterial ribosomal protein bL17 family. Part of the 50S ribosomal subunit. Contacts protein L32.

The polypeptide is Large ribosomal subunit protein bL17 (Pseudomonas syringae pv. tomato (strain ATCC BAA-871 / DC3000)).